Consider the following 552-residue polypeptide: Gamma-aminobutyric acid receptor subunit alpha-4 (552 aa).

A signal peptide spans 1–35 (MVSVQKVPAIALCSGVSLALLHFLCLAACLNESPG). Over 36–259 (QNSKDEKLCP…FHLRRKMGYF (224 aa)) the chain is Extracellular. N-linked (GlcNAc...) asparagine glycosylation is present at Asn-47. Arg-100 contacts 4-aminobutanoate. 2 N-linked (GlcNAc...) asparagine glycosylation sites follow: Asn-144 and Asn-157. Thr-163 is a 4-aminobutanoate binding site. Cys-172 and Cys-186 are oxidised to a cystine. Residues 260–280 (MIQTYIPCIMTVILSQVSFWI) form a helical membrane-spanning segment. The Cytoplasmic portion of the chain corresponds to 281–284 (NKES). The helical transmembrane segment at 285–305 (VPARTVFGITTVLTMTTLSIS) threads the bilayer. Residues 306–318 (ARHSLPKVSYATA) lie on the Extracellular side of the membrane. Residues 319–341 (MDWFIAVCFAFVFSALIEFAAVN) form a helical membrane-spanning segment. Residues 342 to 515 (YFTNIQMQKA…PPPSGSGTSK (174 aa)) are Cytoplasmic-facing. Disordered stretches follow at residues 353–480 (KKIS…FGSR) and 492–513 (GAAGNVSATPPPPAPPPSGSGT). A compositionally biased stretch (basic and acidic residues) spans 396–406 (SESDVKSRTEV). The segment covering 407-422 (GNHSSKTSAVQESSEA) has biased composition (polar residues). The span at 445-458 (SAAARGLSSAASPS) shows a compositional bias: low complexity. Residues 500–509 (TPPPPAPPPS) show a composition bias toward pro residues. The helical transmembrane segment at 516–538 (IDKYARILFPVTFGAFNMVYWVV) threads the bilayer. Residues 539–552 (YLSKDTMEKSESLM) lie on the Extracellular side of the membrane.

It belongs to the ligand-gated ion channel (TC 1.A.9) family. Gamma-aminobutyric acid receptor (TC 1.A.9.5) subfamily. GABRA4 sub-subfamily. As to quaternary structure, heteropentamer, formed by a combination of alpha (GABRA1-6), beta (GABRB1-3), gamma (GABRG1-3), delta (GABRD), epsilon (GABRE), rho (GABRR1-3), pi (GABRP) and theta (GABRQ) chains, each subunit exhibiting distinct physiological and pharmacological properties. In terms of tissue distribution, expressed in the brain.

The protein localises to the cell membrane. It is found in the postsynaptic cell membrane. It carries out the reaction chloride(in) = chloride(out). Potentiated by gaboxadol. Potentiated by histamine. Alpha subunit of the heteropentameric ligand-gated chloride channel gated by gamma-aminobutyric acid (GABA), a major inhibitory neurotransmitter in the brain. GABA-gated chloride channels, also named GABA(A) receptors (GABAAR), consist of five subunits arranged around a central pore and contain GABA active binding site(s) located at the alpha and beta subunit interface(s). Alpha-4/GABRA4 subunit often assembles with delta or gamma-2 subunits, in combination with beta subunits. When activated by GABA, GABAARs selectively allow the flow of chloride anions across the cell membrane down their electrochemical gradient. GABAARs containing alpha-4 are predominantly extrasynaptic, contributing to tonic inhibition in dentate granule cells and thalamic relay neurons. Extrasynaptic alpha-4-containing GABAARs control levels of excitability and network activity. GABAAR containing alpha-4-beta-3-delta subunits can simultaneously bind GABA and histamine where histamine binds at the interface of two neighboring beta subunits, which may be involved in the regulation of sleep and wakefulness. The chain is Gamma-aminobutyric acid receptor subunit alpha-4 from Mus musculus (Mouse).